The following is a 137-amino-acid chain: Small ribosomal subunit protein uS12 (137 aa).

Disordered regions lie at residues 1–21 (MPTINQLVRKPRKSKIEKSDS) and 33–57 (KVQTKMAAPQKRGVATRVGTMTPKK).

It belongs to the universal ribosomal protein uS12 family. Part of the 30S ribosomal subunit. Contacts proteins S8 and S17. May interact with IF1 in the 30S initiation complex.

In terms of biological role, with S4 and S5 plays an important role in translational accuracy. Interacts with and stabilizes bases of the 16S rRNA that are involved in tRNA selection in the A site and with the mRNA backbone. Located at the interface of the 30S and 50S subunits, it traverses the body of the 30S subunit contacting proteins on the other side and probably holding the rRNA structure together. The combined cluster of proteins S8, S12 and S17 appears to hold together the shoulder and platform of the 30S subunit. In Streptococcus pyogenes serotype M1, this protein is Small ribosomal subunit protein uS12.